A 186-amino-acid polypeptide reads, in one-letter code: Ribulose bisphosphate carboxylase small subunit, chloroplastic 6 (186 aa).

A chloroplast-targeting transit peptide spans 1-60; it reads MASSMLSNAAVATTAASRSAGAQASMVAPFTGLKSVSAFPVTRKSSNDLSTVPSNGGKVQ.

Belongs to the RuBisCO small chain family. In terms of assembly, heterohexadecamer of 8 large and 8 small subunits.

The protein localises to the plastid. Its subcellular location is the chloroplast. In terms of biological role, ruBisCO catalyzes two reactions: the carboxylation of D-ribulose 1,5-bisphosphate, the primary event in carbon dioxide fixation, as well as the oxidative fragmentation of the pentose substrate. Both reactions occur simultaneously and in competition at the same active site. Although the small subunit is not catalytic it is essential for maximal activity. This chain is Ribulose bisphosphate carboxylase small subunit, chloroplastic 6, found in Mesembryanthemum crystallinum (Common ice plant).